The following is a 238-amino-acid chain: uncharacterized protein (238 aa).

The Response regulatory domain maps to 3 to 116 (RVIIVDDEQP…RLAKTLTRLS (114 aa)). Residue Asp54 is modified to 4-aspartylphosphate. Positions 136 to 237 (IPCSGHNRIF…LKSLKEKLGI (102 aa)) constitute an HTH LytTR-type domain.

This is an uncharacterized protein from Yersinia pestis.